The following is a 238-amino-acid chain: Epoxyqueuosine reductase QueH (238 aa).

Residues Cys43, Cys44, Cys129, and Cys132 each contribute to the [4Fe-4S] cluster site. Cys211 and Cys213 are joined by a disulfide.

The protein belongs to the QueH family.

It catalyses the reaction epoxyqueuosine(34) in tRNA + AH2 = queuosine(34) in tRNA + A + H2O. It functions in the pathway tRNA modification; tRNA-queuosine biosynthesis. Functionally, catalyzes the conversion of epoxyqueuosine (oQ) to queuosine (Q), which is a hypermodified base found in the wobble positions of tRNA(Asp), tRNA(Asn), tRNA(His) and tRNA(Tyr). In Staphylococcus epidermidis (strain ATCC 12228 / FDA PCI 1200), this protein is Epoxyqueuosine reductase QueH.